A 178-amino-acid polypeptide reads, in one-letter code: 2-oxo-4-hydroxy-4-carboxy-5-ureidoimidazoline decarboxylase (178 aa).

Residue His67 is the Proton donor of the active site. Substrate is bound by residues Pro68, 84-88, and 119-123; these read SQREQ and FVLAA.

Belongs to the OHCU decarboxylase family.

It localises to the peroxisome. The catalysed reaction is 5-hydroxy-2-oxo-4-ureido-2,5-dihydro-1H-imidazole-5-carboxylate + H(+) = (S)-allantoin + CO2. Its pathway is purine metabolism; urate degradation; (S)-allantoin from urate: step 3/3. Functionally, catalyzes the stereoselective decarboxylation of 2-oxo-4-hydroxy-4-carboxy-5-ureidoimidazoline (OHCU) to (S)-allantoin. This chain is 2-oxo-4-hydroxy-4-carboxy-5-ureidoimidazoline decarboxylase (Urad), found in Mus musculus (Mouse).